Here is a 321-residue protein sequence, read N- to C-terminus: Probable arabinan endo-1,5-alpha-L-arabinosidase C (321 aa).

The first 18 residues, 1–18 (MYLYTLILLFLASANVNA), serve as a signal peptide directing secretion. The Proton acceptor role is filled by Asp-33. An N-linked (GlcNAc...) asparagine glycan is attached at Asn-192. Glu-200 acts as the Proton donor in catalysis. Asn-224 carries N-linked (GlcNAc...) asparagine glycosylation.

It belongs to the glycosyl hydrolase 43 family.

The protein localises to the secreted. It catalyses the reaction Endohydrolysis of (1-&gt;5)-alpha-arabinofuranosidic linkages in (1-&gt;5)-arabinans.. Its pathway is glycan metabolism; L-arabinan degradation. Functionally, endo-1,5-alpha-L-arabinanase involved in degradation of pectin. Its preferred substrate is linear 1,5-alpha-L-arabinan. In Aspergillus fumigatus (strain CBS 144.89 / FGSC A1163 / CEA10) (Neosartorya fumigata), this protein is Probable arabinan endo-1,5-alpha-L-arabinosidase C (abnC).